We begin with the raw amino-acid sequence, 248 residues long: Small ribosomal subunit protein uS2 (248 aa).

Belongs to the universal ribosomal protein uS2 family.

The sequence is that of Small ribosomal subunit protein uS2 from Janthinobacterium sp. (strain Marseille) (Minibacterium massiliensis).